We begin with the raw amino-acid sequence, 270 residues long: Cell surface glycoprotein CD200 receptor 5 (270 aa).

Residues 1-25 (MHALGRTPALTLLIFINIFVSGSRC) form the signal peptide. Residues 26–241 (TDKNQTIQND…STTTTTSLLT (216 aa)) are Extracellular-facing. One can recognise an Ig-like V-type domain in the interval 39–145 (PLTQVNTTVS…GNFGRVYDLQ (107 aa)). Residue Asn44 is glycosylated (N-linked (GlcNAc...) asparagine). Cystine bridges form between Cys59–Cys129 and Cys164–Cys213. The region spanning 134–229 (PEGNFGRVYD…GNKSLFIELN (96 aa)) is the Ig-like C2-type domain. N-linked (GlcNAc...) asparagine glycosylation is found at Asn192 and Asn221. Residues 242–262 (ILYVKMVLLGIILLHVGFAFF) form a helical membrane-spanning segment. The Cytoplasmic segment spans residues 263–270 (QKRNVIRT).

It belongs to the CD200R family.

It localises to the membrane. Its function is as follows. May not be a receptor for the CD200/OX2 cell surface glycoprotein. The chain is Cell surface glycoprotein CD200 receptor 5 (Cd200r5) from Mus musculus (Mouse).